The chain runs to 379 residues: Proton extrusion protein PxcA (379 aa).

4 helical membrane passes run 153–173 (TLVSLRILLLMILVPLLLQQI), 254–274 (AIKNVLADVVATIGFVLVCLF), 300–320 (FVIILFTDIFVGFHSPEGWTV), and 337–357 (FIDLFIATFPVILATIFKYWI).

Belongs to the CemA family.

It localises to the cell inner membrane. Functionally, required for H(+) efflux immediately after light irradiation to form a rapid H(+) concentration gradient across the thylakoid membranes. Together with PxcL, contributes to transient H(+) uptake following dark to light transition. The chain is Proton extrusion protein PxcA from Synechococcus sp. (strain RCC307).